The primary structure comprises 248 residues: 1-(5-phosphoribosyl)-5-[(5-phosphoribosylamino)methylideneamino] imidazole-4-carboxamide isomerase (248 aa).

Asp8 functions as the Proton acceptor in the catalytic mechanism. The active-site Proton donor is Asp127.

Belongs to the HisA/HisF family.

It is found in the cytoplasm. It carries out the reaction 1-(5-phospho-beta-D-ribosyl)-5-[(5-phospho-beta-D-ribosylamino)methylideneamino]imidazole-4-carboxamide = 5-[(5-phospho-1-deoxy-D-ribulos-1-ylimino)methylamino]-1-(5-phospho-beta-D-ribosyl)imidazole-4-carboxamide. It functions in the pathway amino-acid biosynthesis; L-histidine biosynthesis; L-histidine from 5-phospho-alpha-D-ribose 1-diphosphate: step 4/9. The chain is 1-(5-phosphoribosyl)-5-[(5-phosphoribosylamino)methylideneamino] imidazole-4-carboxamide isomerase from Thermotoga neapolitana (strain ATCC 49049 / DSM 4359 / NBRC 107923 / NS-E).